The primary structure comprises 608 residues: Aspartate--tRNA(Asp/Asn) ligase (608 aa).

Glu-175 provides a ligand contact to L-aspartate. The tract at residues 199–202 (QLFK) is aspartate. Arg-221 lines the L-aspartate pocket. ATP-binding positions include 221 to 223 (RDE) and Gln-230. His-453 is a binding site for L-aspartate. Glu-487 is a binding site for ATP. Residue Arg-494 coordinates L-aspartate. 539–542 (GWDR) is a binding site for ATP. The disordered stretch occupies residues 566–608 (IDPLTDAPAAITPQQRKEAGIDAKPKPKAEAQAEAQAEESAEK). A compositionally biased stretch (basic and acidic residues) spans 580–596 (QRKEAGIDAKPKPKAEA).

Belongs to the class-II aminoacyl-tRNA synthetase family. Type 1 subfamily. Homodimer.

It is found in the cytoplasm. The enzyme catalyses tRNA(Asx) + L-aspartate + ATP = L-aspartyl-tRNA(Asx) + AMP + diphosphate. Aspartyl-tRNA synthetase with relaxed tRNA specificity since it is able to aspartylate not only its cognate tRNA(Asp) but also tRNA(Asn). Reaction proceeds in two steps: L-aspartate is first activated by ATP to form Asp-AMP and then transferred to the acceptor end of tRNA(Asp/Asn). The chain is Aspartate--tRNA(Asp/Asn) ligase from Corynebacterium glutamicum (strain R).